The chain runs to 670 residues: Probable membrane-anchored ferredoxin csal_0991 (670 aa).

The next 5 helical transmembrane spans lie at 2 to 22 (LDIL…IGAV), 68 to 90 (VATA…LGLA), 94 to 113 (LGWL…LFVA), 135 to 155 (LMAF…VLPA), and 159 to 179 (GWLV…ELVF). 4Fe-4S ferredoxin-type domains follow at residues 241–271 (WNQL…PLNP) and 316–347 (GTAL…HVDA). 8 residues coordinate [4Fe-4S] cluster: Cys-250, Cys-253, Cys-256, Cys-260, Cys-328, Cys-331, Cys-334, and Cys-338. The segment at 648-670 (NTPPATPASHDTAASQATEEVLS) is disordered. Residues 659–670 (TAASQATEEVLS) are compositionally biased toward polar residues.

Requires [4Fe-4S] cluster as cofactor.

Its subcellular location is the cell inner membrane. In terms of biological role, participates in the electron transfer process during N,N-dimethylglycine (DMG) degradation to sarcosine. Probably transfers the electrons from N,N-dimethylglycine/sarcosine dehydrogenase (DMGDH) to the electron transfer flavoprotein (ETF) EtfA-EtfB. The sequence is that of Probable membrane-anchored ferredoxin csal_0991 from Chromohalobacter salexigens (strain ATCC BAA-138 / DSM 3043 / CIP 106854 / NCIMB 13768 / 1H11).